A 2554-amino-acid chain; its full sequence is Protein sevenless (2554 aa).

Residues Met-1 to Asp-10 are compositionally biased toward polar residues. The tract at residues Met-1–Pro-25 is disordered. The Extracellular segment spans residues Met-1–Arg-2123. Basic and acidic residues predominate over residues His-11–Ala-20. Asn-30 carries N-linked (GlcNAc...) asparagine glycosylation. A compositionally biased stretch (low complexity) spans Asn-51–Ser-70. The interval Asn-51–Arg-75 is disordered. A glycan (N-linked (GlcNAc...) asparagine) is linked at Asn-129. The segment at Ser-181–Asp-208 is disordered. Residues His-189 to Asp-208 are compositionally biased toward basic and acidic residues. The Fibronectin type-III 1 domain occupies Ala-440–Asn-533. Residues Asn-481, Asn-505, Asn-617, and Asn-647 are each glycosylated (N-linked (GlcNAc...) asparagine). The Fibronectin type-III 2 domain occupies Ala-824–Leu-924. N-linked (GlcNAc...) asparagine glycosylation is present at Asn-966. An LDL-receptor class B repeat occupies Gly-1010 to Tyr-1053. 2 Fibronectin type-III domains span residues Leu-1202–Val-1290 and Gln-1294–Glu-1397. Residues Asn-1228, Asn-1313, Asn-1353, Asn-1550, Asn-1557, Asn-1639, Asn-1725, Asn-1756, Asn-1804, Asn-1889, Asn-1947, and Asn-2073 are each glycosylated (N-linked (GlcNAc...) asparagine). 3 consecutive Fibronectin type-III domains span residues Pro-1801–Glu-1901, Leu-1902–Thr-1988, and Gln-1995–Phe-2117. A helical transmembrane segment spans residues Gly-2124 to Val-2147. At Arg-2148–Leu-2554 the chain is on the cytoplasmic side. In terms of domain architecture, Protein kinase spans Leu-2209–Ser-2485. Residues Leu-2215 to Val-2223 and Lys-2242 contribute to the ATP site. Asp-2343 (proton acceptor) is an active-site residue. Residue Tyr-2380 is modified to Phosphotyrosine; by autocatalysis. Basic and acidic residues predominate over residues Gly-2515–Arg-2527. A disordered region spans residues Gly-2515 to Thr-2534.

The protein belongs to the protein kinase superfamily. Tyr protein kinase family. Insulin receptor subfamily. May form a complex with drk and Sos. Binds the phosphotyrosine interaction domain (PID) of Dab.

It is found in the cell membrane. The catalysed reaction is L-tyrosyl-[protein] + ATP = O-phospho-L-tyrosyl-[protein] + ADP + H(+). Functionally, receptor for an extracellular signal required to instruct a cell to differentiate into an R7 photoreceptor. The ligand for sev is the boss (bride of sevenless) protein on the surface of the neighboring R8 cell. This is Protein sevenless (sev) from Drosophila melanogaster (Fruit fly).